We begin with the raw amino-acid sequence, 537 residues long: RNA polymerase sigma-54 factor 2 (537 aa).

The interval Ala52–Gly90 is disordered. The span at Glu55–Gly66 shows a compositional bias: low complexity. The H-T-H motif DNA-binding region spans Asn403 to Thr422. Residues Ala492–Arg500 carry the RPON box motif. The disordered stretch occupies residues Ser507 to Ala537. Polar residues predominate over residues Ala518–Ser528.

The protein belongs to the sigma-54 factor family.

Sigma factors are initiation factors that promote the attachment of RNA polymerase to specific initiation sites and are then released. This sigma factor is responsible for the expression of the nitrogen fixation genes. This Bradyrhizobium diazoefficiens (strain JCM 10833 / BCRC 13528 / IAM 13628 / NBRC 14792 / USDA 110) protein is RNA polymerase sigma-54 factor 2 (rpoN2).